A 466-amino-acid chain; its full sequence is Uronate isomerase (466 aa).

It belongs to the metallo-dependent hydrolases superfamily. Uronate isomerase family.

The catalysed reaction is D-glucuronate = D-fructuronate. It carries out the reaction aldehydo-D-galacturonate = keto-D-tagaturonate. The protein operates within carbohydrate metabolism; pentose and glucuronate interconversion. The polypeptide is Uronate isomerase (Caldanaerobacter subterraneus subsp. tengcongensis (strain DSM 15242 / JCM 11007 / NBRC 100824 / MB4) (Thermoanaerobacter tengcongensis)).